A 142-amino-acid polypeptide reads, in one-letter code: Large ribosomal subunit protein uL23 (142 aa).

It belongs to the universal ribosomal protein uL23 family.

The chain is Large ribosomal subunit protein uL23 (RPL25) from Kluyveromyces lactis (strain ATCC 8585 / CBS 2359 / DSM 70799 / NBRC 1267 / NRRL Y-1140 / WM37) (Yeast).